The following is a 138-amino-acid chain: Putative pre-16S rRNA nuclease (138 aa).

The protein belongs to the YqgF nuclease family.

Its subcellular location is the cytoplasm. In terms of biological role, could be a nuclease involved in processing of the 5'-end of pre-16S rRNA. In Salmonella arizonae (strain ATCC BAA-731 / CDC346-86 / RSK2980), this protein is Putative pre-16S rRNA nuclease.